The primary structure comprises 65 residues: Large ribosomal subunit protein bL35 (65 aa).

The tract at residues 1 to 28 is disordered; that stretch reads MPKLKTRKAAARRFKATGSGKIKRRKAF.

It belongs to the bacterial ribosomal protein bL35 family.

This chain is Large ribosomal subunit protein bL35, found in Trichodesmium erythraeum (strain IMS101).